A 411-amino-acid polypeptide reads, in one-letter code: UPF0761 membrane protein PA0951 (411 aa).

The next 6 membrane-spanning stretches (helical) occupy residues 36 to 56, 92 to 112, 132 to 152, 174 to 194, 207 to 229, and 244 to 264; these read LFAVVPMMTVMFSMLSLIPAF, HLTWVGVVFLAVTAFTMLVTI, FLLYWAILSLGPLLLGAGFAV, LLGLMPLAFSVAAFTLLYSAV, GGVFTAVLFEAAKTLFGLYVSLF, and IFLLWIYLSWMIVLFGAVLVC.

Belongs to the UPF0761 family.

Its subcellular location is the cell inner membrane. The chain is UPF0761 membrane protein PA0951 from Pseudomonas aeruginosa (strain ATCC 15692 / DSM 22644 / CIP 104116 / JCM 14847 / LMG 12228 / 1C / PRS 101 / PAO1).